The chain runs to 385 residues: MDMKSGHSSPVMTDSPPISNSRLTIRQNRLPYSSAAATAISQNNNLLLTVPRKKTGILDDVKSNGWLDAMKSSSPPPTILNKDNLSNDATDMTYREWMQLKYPSALTSFEKIMSFAKGKRIALFLDYDGTLSPIVEEPDCAYMSSAMRSAVQNVAKYFPTAIISGRSRDKVYEFVNLSELYYAGSHGMDIMSPAGESLNHEHSRTVSVYEQGKDVNLFQPASEFLPMIDKVLCSLIESTKDIKGVKVEDNKFCISVHYRNVEEKNWTLVAQCVDDVIRTYPKLRLTHGRKVLEIRPVIDWDKGKAVTFLLESLGLNNCEDVLPIYVGDDRTDEDAFKVLRDGPNHGYGILVSAVPKDSNAFYSLRDPSEVMEFLKSLVTWKRSMG.

Positions 1-21 (MDMKSGHSSPVMTDSPPISNS) are disordered.

The protein belongs to the trehalose phosphatase family. Requires a divalent metal cation as cofactor. As to expression, expressed in flowers.

It carries out the reaction alpha,alpha-trehalose 6-phosphate + H2O = alpha,alpha-trehalose + phosphate. Its pathway is glycan biosynthesis; trehalose biosynthesis. In terms of biological role, removes the phosphate from trehalose 6-phosphate to produce free trehalose. Trehalose accumulation in plant may improve abiotic stress tolerance. In Arabidopsis thaliana (Mouse-ear cress), this protein is Trehalose-phosphate phosphatase A (TPPA).